The chain runs to 135 residues: Protein Wnt-7b (135 aa).

2 disulfides stabilise this stretch: C3-C17 and C5-C12. Residue S9 is the site of O-palmitoleoyl serine; by PORCN attachment. Positions 41 to 69 are disordered linker; the sequence is VEVVRANRLRQPTFLKIKKVRSYQKPMET. Disulfide bonds link C81-C112, C97-C107, and C134-C135. The N-linked (GlcNAc...) asparagine glycan is linked to N98.

Belongs to the Wnt family. Post-translationally, palmitoleoylation is required for efficient binding to frizzled receptors. Depalmitoleoylation leads to Wnt signaling pathway inhibition. In adults, in brain and lung.

The protein resides in the secreted. It is found in the extracellular space. Its subcellular location is the extracellular matrix. Ligand for members of the frizzled family of seven transmembrane receptors that functions in the canonical Wnt/beta-catenin signaling pathway. Required for normal fusion of the chorion and the allantois during placenta development. Required for central nervous system (CNS) angiogenesis and blood-brain barrier regulation. This Xenopus laevis (African clawed frog) protein is Protein Wnt-7b (wnt7b).